The following is a 354-amino-acid chain: Rhodopsin (354 aa).

The Extracellular portion of the chain corresponds to Met-1 to Met-36. Asn-2 and Asn-15 each carry an N-linked (GlcNAc...) asparagine glycan. The chain crosses the membrane as a helical span at residues Phe-37–Val-61. The Cytoplasmic segment spans residues Thr-62–Asn-73. The helical transmembrane segment at Tyr-74–Ile-96 threads the bilayer. The Extracellular segment spans residues Thr-97–Cys-110. Cys-110 and Cys-187 are disulfide-bonded. The chain crosses the membrane as a helical span at residues Asn-111–Ile-133. A 'Ionic lock' involved in activated form stabilization motif is present at residues Glu-134 to Tyr-136. Residues Glu-134–His-152 lie on the Cytoplasmic side of the membrane. A helical transmembrane segment spans residues Ala-153 to Val-173. At Gly-174–Ser-202 the chain is on the extracellular side. The chain crosses the membrane as a helical span at residues Phe-203 to Gly-224. Topologically, residues Arg-225 to Arg-252 are cytoplasmic. The chain crosses the membrane as a helical span at residues Met-253–Tyr-274. Topologically, residues Ile-275–Phe-286 are extracellular. A helical membrane pass occupies residues Phe-287–Leu-308. N6-(retinylidene)lysine is present on Lys-296. Residues Met-309 to Ala-354 are Cytoplasmic-facing. Cys-322 carries the S-palmitoyl cysteine lipid modification. A disordered region spans residues Ser-333–Ala-354. The segment covering Thr-334–Ala-354 has biased composition (low complexity).

This sequence belongs to the G-protein coupled receptor 1 family. Opsin subfamily. In terms of processing, phosphorylated on some or all of the serine and threonine residues present in the C-terminal region. Post-translationally, contains one covalently linked retinal chromophore.

The protein localises to the membrane. The protein resides in the cell projection. Its subcellular location is the cilium. It is found in the photoreceptor outer segment. Photoreceptor required for image-forming vision at low light intensity. While most salt water fish species use retinal as chromophore, most freshwater fish use 3-dehydroretinal, or a mixture of retinal and 3-dehydroretinal. Light-induced isomerization of 11-cis to all-trans retinal triggers a conformational change that activates signaling via G-proteins. Subsequent receptor phosphorylation mediates displacement of the bound G-protein alpha subunit by arrestin and terminates signaling. The sequence is that of Rhodopsin (rho) from Leucoraja erinaceus (Little skate).